We begin with the raw amino-acid sequence, 147 residues long: Ponticulin-like protein C3 (147 aa).

The N-terminal stretch at 1 to 20 (MKFTKSLLLLIVAVFASSNA) is a signal peptide. Asparagine 118 is lipidated: GPI-like-anchor amidated asparagine. A glycan (N-linked (GlcNAc...) asparagine) is linked at asparagine 118. Positions 119-147 (SSESDSSDSTRIGASFALFALALLSMLAL) are cleaved as a propeptide — removed in mature form.

It belongs to the ponticulin family. Post-translationally, the GPI-like-anchor contains a phosphoceramide group, rather than a phosphatidyl group.

The protein localises to the cell membrane. The chain is Ponticulin-like protein C3 (ponC3) from Dictyostelium discoideum (Social amoeba).